Here is a 318-residue protein sequence, read N- to C-terminus: DNA primase small subunit PriS (318 aa).

Residues Asp-95, Asp-97, and Asp-224 contribute to the active site.

Belongs to the eukaryotic-type primase small subunit family. As to quaternary structure, heterodimer of a small subunit (PriS) and a large subunit (PriL). Mg(2+) is required as a cofactor. Requires Mn(2+) as cofactor.

Catalytic subunit of DNA primase, an RNA polymerase that catalyzes the synthesis of short RNA molecules used as primers for DNA polymerase during DNA replication. The small subunit contains the primase catalytic core and has DNA synthesis activity on its own. Binding to the large subunit stabilizes and modulates the activity, increasing the rate of DNA synthesis while decreasing the length of the DNA fragments, and conferring RNA synthesis capability. The DNA polymerase activity may enable DNA primase to also catalyze primer extension after primer synthesis. May also play a role in DNA repair. This chain is DNA primase small subunit PriS, found in Sulfurisphaera tokodaii (strain DSM 16993 / JCM 10545 / NBRC 100140 / 7) (Sulfolobus tokodaii).